Here is a 37-residue protein sequence, read N- to C-terminus: Large ribosomal subunit protein bL36 (37 aa).

It belongs to the bacterial ribosomal protein bL36 family.

The chain is Large ribosomal subunit protein bL36 from Mycoplasmopsis synoviae (strain 53) (Mycoplasma synoviae).